We begin with the raw amino-acid sequence, 686 residues long: Kinesin light chain (686 aa).

Disordered stretches follow at residues 1 to 23 and 158 to 204; these read MSGSKLSTPNNSGGGQGNLSQEQ and KYDE…SVSA. Residues 20–160 are a coiled coil; it reads SQEQIITGTR…EYMNSIKKYD (141 aa). TPR repeat units lie at residues 215–248, 257–290, 299–332, 341–374, 383–416, and 472–505; these read LRTLHNLVIQYASQSRYEVAVPLCKQALEDLEKT, ATMLNILALVYRDQNKYKEAGNLLHDALAIREKT, AATLNNLAVLYGKRGKYKEAEPLCKRALEIREKV, AKQLNNLALLCQNQGKYEEVEWYYQRALEIYEKK, AKTKNNLAAAYLKQGKYKAAETLYKQVLTRAHER, and TTTLKNLGALYRRQGKYDAAEILEECAMKSRRNA. 2 disordered regions span residues 520 to 558 and 586 to 686; these read QDLSTDVPRSEAMAKERHHRRSSGTPRHGSTESVSYEKT and GYVE…SGNF. A compositionally biased stretch (polar residues) spans 675 to 686; sequence DNLSSRRQSGNF.

The protein belongs to the kinesin light chain family. In terms of assembly, oligomeric complex composed of two heavy chains and two light chains. Post-translationally, phosphorylation may modulate the process of mechanochemical coupling.

The protein resides in the cytoplasm. It is found in the cytoskeleton. Functionally, kinesin is a microtubule-associated force-producing protein that may play a role in organelle transport. The light chain may function in coupling of cargo to the heavy chain or in the modulation of its ATPase activity. The polypeptide is Kinesin light chain (Strongylocentrotus purpuratus (Purple sea urchin)).